Here is a 204-residue protein sequence, read N- to C-terminus: Putative F-box protein L168 (204 aa).

An F-box domain is found at 1–46; that stretch reads MNLCDLFDEIIIGIIDELSDRDKIKFMTTCSRFYYFIDKTKYFDIY. Residues 161 to 184 are disordered; the sequence is NETNKITNNHTNKKINNNKKHQNN. Residues 171-183 show a composition bias toward basic residues; the sequence is TNKKINNNKKHQN.

The chain is Putative F-box protein L168 from Acanthamoeba polyphaga (Amoeba).